A 397-amino-acid polypeptide reads, in one-letter code: MLSQLIERSTQYVREASLEEQNRIMPLIDFGPYVNQEPGAHERIIQQLRAACESTGFFQIVNSPISPDVVKNAFRASKQFFELPFDEKLTLSKDMFSNRGYELMEDFVLEGEEDSSSPLEISGIDFEAGSYPGEAPLPPSSIGYVLPPSSLANGEGSSMFDADMTTSNAVAHGDESISNEFRESFYFGNDNLSKDRLLRPFQGPNKWPSTAGSSFRKALVKYHDQMLAFANHVMSLLAESLELSPDAFDEFCSDPTTSIRLLRYPSSPNRLGVQEHTDADALTLMSQDNVKGLEILDPVSNCFLSVSPAPGALIANLGDIMAILTNNRYKSSMHRVCNNSGSDRYTIPFFLQGNIDYVVAPLPGLGPSTAEPIAVEDLLRDHFQNSYTSHTTSLEVA.

Positions 255 to 353 constitute a Fe2OG dioxygenase domain; sequence PTTSIRLLRY…RYTIPFFLQG (99 aa).

It belongs to the iron/ascorbate-dependent oxidoreductase family.

This is Sexual differentiation process protein isp7 (isp7) from Schizosaccharomyces pombe (strain 972 / ATCC 24843) (Fission yeast).